We begin with the raw amino-acid sequence, 305 residues long: Ribosomal RNA small subunit methyltransferase H (305 aa).

S-adenosyl-L-methionine is bound by residues 37–39 (GGH), aspartate 57, phenylalanine 85, aspartate 101, and histidine 108.

It belongs to the methyltransferase superfamily. RsmH family.

Its subcellular location is the cytoplasm. It catalyses the reaction cytidine(1402) in 16S rRNA + S-adenosyl-L-methionine = N(4)-methylcytidine(1402) in 16S rRNA + S-adenosyl-L-homocysteine + H(+). Functionally, specifically methylates the N4 position of cytidine in position 1402 (C1402) of 16S rRNA. This Parabacteroides distasonis (strain ATCC 8503 / DSM 20701 / CIP 104284 / JCM 5825 / NCTC 11152) protein is Ribosomal RNA small subunit methyltransferase H.